The primary structure comprises 162 residues: D-aminoacyl-tRNA deacylase (162 aa).

Positions Gly-145–Pro-146 match the Gly-cisPro motif, important for rejection of L-amino acids motif.

Belongs to the DTD family. As to quaternary structure, homodimer.

The protein resides in the cytoplasm. It carries out the reaction glycyl-tRNA(Ala) + H2O = tRNA(Ala) + glycine + H(+). It catalyses the reaction a D-aminoacyl-tRNA + H2O = a tRNA + a D-alpha-amino acid + H(+). An aminoacyl-tRNA editing enzyme that deacylates mischarged D-aminoacyl-tRNAs. Also deacylates mischarged glycyl-tRNA(Ala), protecting cells against glycine mischarging by AlaRS. Acts via tRNA-based rather than protein-based catalysis; rejects L-amino acids rather than detecting D-amino acids in the active site. By recycling D-aminoacyl-tRNA to D-amino acids and free tRNA molecules, this enzyme counteracts the toxicity associated with the formation of D-aminoacyl-tRNA entities in vivo and helps enforce protein L-homochirality. The chain is D-aminoacyl-tRNA deacylase from Bifidobacterium longum (strain NCC 2705).